Here is a 58-residue protein sequence, read N- to C-terminus: UPF0434 protein Swoo_1821 (58 aa).

It belongs to the UPF0434 family.

This Shewanella woodyi (strain ATCC 51908 / MS32) protein is UPF0434 protein Swoo_1821.